The sequence spans 375 residues: Amylovoran biosynthesis protein AmsC (375 aa).

The next 9 helical transmembrane spans lie at 2-22 (AIYWIVSYSILVFCFFELAMI), 31-51 (KILINYFFLIGVFALILFAGI), 93-113 (MVLAWVASCFTHESYFFLLFI), 162-182 (IAFICSLVARNYLLALLFIVL), 208-228 (LPLVLVIASIPLGIIGGKKLF), 256-276 (VFGLANLKNIAFIGAFTLYYF), 287-307 (VYILLIAYSIGAAVRITFSDF), 309-329 (IFGGRVGNLFLHTEPLLFAFL), and 337-357 (LLNFFMLFSITTYYLAYNTIL).

The protein localises to the cell membrane. Its pathway is glycan metabolism; exopolysaccharide biosynthesis. In terms of biological role, involved in the biosynthesis of amylovoran which functions as a virulence factor. The polypeptide is Amylovoran biosynthesis protein AmsC (amsC) (Erwinia amylovora (Fire blight bacteria)).